The primary structure comprises 400 residues: Glycerol-3-phosphate dehydrogenase [NAD(+)] 1, chloroplastic (400 aa).

The transit peptide at 1–32 (MRFRSFFFSSSIFSLSHSRSPSLSSSRFSSLS) directs the protein to the chloroplast. NAD(+) contacts are provided by residues 61–66 (GSGNWG), Phe-92, Phe-149, Lys-172, and Ala-205. Lys-172 is a binding site for substrate. Lys-257 functions as the Proton acceptor in the catalytic mechanism. NAD(+) is bound by residues Arg-321, Lys-350, and Gln-352. Substrate is bound at residue 321 to 322 (RN).

The protein belongs to the NAD-dependent glycerol-3-phosphate dehydrogenase family. As to expression, expressed in young seedlings, flowers and siliques. Expressed at low levels in roots.

Its subcellular location is the plastid. It is found in the chloroplast. It catalyses the reaction sn-glycerol 3-phosphate + NAD(+) = dihydroxyacetone phosphate + NADH + H(+). It functions in the pathway membrane lipid metabolism; glycerophospholipid metabolism. Involved in glycerolipid metabolism. The chain is Glycerol-3-phosphate dehydrogenase [NAD(+)] 1, chloroplastic (DHAPRD) from Arabidopsis thaliana (Mouse-ear cress).